The sequence spans 2149 residues: Polyketide synthase 1 (2149 aa).

Residues 19-261 form an N-terminal acylcarrier protein transacylase domain (SAT) region; that stretch reads FIFGDQSSCN…TRLAVHAPYH (243 aa). One can recognise a Ketosynthase family 3 (KS3) domain in the interval 394–829; it reads ESKIAIIGMS…GGNTALLVED (436 aa). Residues Cys566, His701, and His745 each act as for beta-ketoacyl synthase activity in the active site. A malonyl-CoA:ACP transacylase (MAT) domain region spans residues 929-1233; it reads AFVFSGQGSQ…PSLMRNKDGW (305 aa). The active-site For acyl/malonyl transferase activity is the Ser1018. The interval 1310 to 1624 is product template (PT) domain; that stretch reads TASVHRIVHE…RKVLNTAMPP (315 aa). The N-terminal hotdog fold stretch occupies residues 1314 to 1447; the sequence is HRIVHESVDK…SSLHFERPKV (134 aa). The PKS/mFAS DH domain maps to 1314 to 1619; it reads HRIVHESVDK…FQGIPRKVLN (306 aa). His1346 acts as the Proton acceptor; for dehydratase activity in catalysis. A C-terminal hotdog fold region spans residues 1474–1619; sequence LNSRMSSGVI…FQGIPRKVLN (146 aa). The Proton donor; for dehydratase activity role is filled by Asp1533. The disordered stretch occupies residues 1619–1657; the sequence is NTAMPPPKSQNEAPVRSAPAKPAAKPPKSASSEHSGHFA. The segment covering 1635–1650 has biased composition (low complexity); that stretch reads SAPAKPAAKPPKSASS. Positions 1678–1752 constitute a Carrier 1 domain; the sequence is RNPMLAVFKI…DLATHLGLDT (75 aa). The residue at position 1712 (Ser1712) is an O-(pantetheine 4'-phosphoryl)serine. Residues 1755–1790 show a composition bias toward low complexity; that stretch reads SDQSSGQSSSSGGLSPRSDSIGEITSSATTPPSLSP. The interval 1755 to 1796 is disordered; that stretch reads SDQSSGQSSSSGGLSPRSDSIGEITSSATTPPSLSPRGSVSG. The Carrier 2 domain occupies 1793-1870; sequence SVSGSQCKDV…SFKHMFQQGH (78 aa). Ser1830 carries the O-(pantetheine 4'-phosphoryl)serine modification. Residues 1882 to 2147 form a thioesterase (TE) domain region; the sequence is LKQYRATSTL…ERVAAFIRST (266 aa). Catalysis depends on Ser1973, which acts as the For thioesterase activity.

Polyketide synthase; part of the Pks1 gene cluster that mediates the biosynthesis of an anthraquinone derivative pigment that contributes to conidial pigmentation that provides protection from UV radiation, heat and cold stress. The polyketide synthase Pks1 produces 1-acetyl-2,4,6,8-tetrahydroxy-9,10-anthraquinone though condensation of acetyl-CoA with malonyl-CoA. The dehydratase EthD and the laccase Mlac1 further convert the anthraquinone derivative into the final conidial pigment. This chain is Polyketide synthase 1, found in Metarhizium majus (strain ARSEF 297).